The chain runs to 427 residues: Thyroid hormone receptor alpha-A (427 aa).

Basic and acidic residues predominate over residues 1-11; it reads MENTEQEHNLP. The disordered stretch occupies residues 1–40; the sequence is MENTEQEHNLPEGDETQWPNGVKRKRKNSQCSMNSTSDKS. Residues 1–56 are modulating; sequence MENTEQEHNLPEGDETQWPNGVKRKRKNSQCSMNSTSDKSISVPGYVPSYLEKDEP. Positions 29–40 are enriched in polar residues; that stretch reads SQCSMNSTSDKS. NR C4-type zinc fingers lie at residues 57 to 77 and 95 to 119; these read CVVC…CEGC and CKYD…FRKC. Positions 57–131 form a DNA-binding region, nuclear receptor; that stretch reads CVVCGDKATG…VGMAMDLVLD (75 aa). The NR LBD domain occupies 167–410; it reads SEWELIRMVT…PPLFLEVFED (244 aa).

The protein belongs to the nuclear hormone receptor family. NR1 subfamily. In terms of assembly, interacts with ncoa2. In terms of tissue distribution, after the mid-blastula transition (MBT), expressed throughout the deep cells, which give rise to the embryo proper. In adults, isoform 2 shows highest expression in the eye and liver. Expressed in adult gonads.

The protein resides in the nucleus. Functionally, high affinity receptor for triiodothyronine. In the absence of thyroid hormone during late blastula stage development, acts as a transcriptional repressor. Whereas in the presence of thyroid hormone, can act as an activator of transcription. In addition, represses retinoic acid (RA)-signaling during blastula and gastrula stages of development. This Danio rerio (Zebrafish) protein is Thyroid hormone receptor alpha-A (thraa).